The chain runs to 817 residues: Cargo-transport protein YPP1 (817 aa).

This sequence belongs to the YPP1 family. Interacts with ribosomes.

The protein resides in the cytoplasmic granule. It localises to the cell membrane. Functionally, involved in endocytosis. The protein is Cargo-transport protein YPP1 (YPP1) of Saccharomyces cerevisiae (strain ATCC 204508 / S288c) (Baker's yeast).